A 240-amino-acid chain; its full sequence is Uridylate kinase (240 aa).

12-15 (KLSG) provides a ligand contact to ATP. An involved in allosteric activation by GTP region spans residues 20 to 25 (GDKGFG). Glycine 54 is a UMP binding site. The ATP site is built by glycine 55 and arginine 59. UMP contacts are provided by residues aspartate 74 and 135–142 (TGSPYFST). Residues asparagine 163, tyrosine 169, and aspartate 172 each contribute to the ATP site.

This sequence belongs to the UMP kinase family. As to quaternary structure, homohexamer.

It is found in the cytoplasm. It catalyses the reaction UMP + ATP = UDP + ADP. Its pathway is pyrimidine metabolism; CTP biosynthesis via de novo pathway; UDP from UMP (UMPK route): step 1/1. Allosterically activated by GTP. Inhibited by UTP. Its function is as follows. Catalyzes the reversible phosphorylation of UMP to UDP. This Levilactobacillus brevis (strain ATCC 367 / BCRC 12310 / CIP 105137 / JCM 1170 / LMG 11437 / NCIMB 947 / NCTC 947) (Lactobacillus brevis) protein is Uridylate kinase.